Consider the following 672-residue polypeptide: Acetoacetyl-CoA synthetase (672 aa).

This sequence belongs to the ATP-dependent AMP-binding enzyme family. In terms of tissue distribution, abundant in male subcutaneous white adipose tissue after weaning. In white adipose tissue, it is preferentially detected in mature adipocytes but not in preadipocytes. The expression in primary preadipocytes increases during the adipocyte differentiation. In brain, it is expressed in the midbrain, pons/medulla, cerebral cortex, hippocampus and cerebellum. The expression in the cerebellum is restricted primarily to glial cells, while in the cerebral cortex, it is restricted to neuronal cells.

It is found in the cytoplasm. The protein localises to the cytosol. It carries out the reaction acetoacetate + ATP + CoA = acetoacetyl-CoA + AMP + diphosphate. In terms of biological role, converts acetoacetate to acetoacetyl-CoA in the cytosol. Ketone body-utilizing enzyme, responsible for the synthesis of cholesterol and fatty acids. In Rattus norvegicus (Rat), this protein is Acetoacetyl-CoA synthetase (Aacs).